A 475-amino-acid polypeptide reads, in one-letter code: Aspartyl/glutamyl-tRNA(Asn/Gln) amidotransferase subunit B (475 aa).

This sequence belongs to the GatB/GatE family. GatB subfamily. In terms of assembly, heterotrimer of A, B and C subunits.

It carries out the reaction L-glutamyl-tRNA(Gln) + L-glutamine + ATP + H2O = L-glutaminyl-tRNA(Gln) + L-glutamate + ADP + phosphate + H(+). The catalysed reaction is L-aspartyl-tRNA(Asn) + L-glutamine + ATP + H2O = L-asparaginyl-tRNA(Asn) + L-glutamate + ADP + phosphate + 2 H(+). Allows the formation of correctly charged Asn-tRNA(Asn) or Gln-tRNA(Gln) through the transamidation of misacylated Asp-tRNA(Asn) or Glu-tRNA(Gln) in organisms which lack either or both of asparaginyl-tRNA or glutaminyl-tRNA synthetases. The reaction takes place in the presence of glutamine and ATP through an activated phospho-Asp-tRNA(Asn) or phospho-Glu-tRNA(Gln). The sequence is that of Aspartyl/glutamyl-tRNA(Asn/Gln) amidotransferase subunit B from Chlorobium luteolum (strain DSM 273 / BCRC 81028 / 2530) (Pelodictyon luteolum).